The chain runs to 63 residues: Large ribosomal subunit protein uL29 (63 aa).

This sequence belongs to the universal ribosomal protein uL29 family.

The sequence is that of Large ribosomal subunit protein uL29 from Glaesserella parasuis serovar 5 (strain SH0165) (Haemophilus parasuis).